A 699-amino-acid polypeptide reads, in one-letter code: Elongation factor G (699 aa).

Residues Glu-8 to Ile-287 enclose the tr-type G domain. Residues Ala-17–Thr-24, Asp-85–His-89, and Asn-139–Asp-142 each bind GTP.

Belongs to the TRAFAC class translation factor GTPase superfamily. Classic translation factor GTPase family. EF-G/EF-2 subfamily.

Its subcellular location is the cytoplasm. Functionally, catalyzes the GTP-dependent ribosomal translocation step during translation elongation. During this step, the ribosome changes from the pre-translocational (PRE) to the post-translocational (POST) state as the newly formed A-site-bound peptidyl-tRNA and P-site-bound deacylated tRNA move to the P and E sites, respectively. Catalyzes the coordinated movement of the two tRNA molecules, the mRNA and conformational changes in the ribosome. This chain is Elongation factor G (fusA), found in Aquifex aeolicus (strain VF5).